The chain runs to 168 residues: S-ribosylhomocysteine lyase (168 aa).

Fe cation contacts are provided by H54, H58, and C128.

Belongs to the LuxS family. As to quaternary structure, homodimer. It depends on Fe cation as a cofactor.

It carries out the reaction S-(5-deoxy-D-ribos-5-yl)-L-homocysteine = (S)-4,5-dihydroxypentane-2,3-dione + L-homocysteine. In terms of biological role, involved in the synthesis of autoinducer 2 (AI-2) which is secreted by bacteria and is used to communicate both the cell density and the metabolic potential of the environment. The regulation of gene expression in response to changes in cell density is called quorum sensing. Catalyzes the transformation of S-ribosylhomocysteine (RHC) to homocysteine (HC) and 4,5-dihydroxy-2,3-pentadione (DPD). The chain is S-ribosylhomocysteine lyase from Histophilus somni (strain 2336) (Haemophilus somnus).